We begin with the raw amino-acid sequence, 173 residues long: Cytochrome c homolog (173 aa).

At 1–8 (MSGKELNK) the chain is on the cytoplasmic side. Residues 9-29 (IVAAILFASLIAMMVGFIANI) form a helical; Signal-anchor membrane-spanning segment. The Periplasmic segment spans residues 30-173 (LYKPVLEPKH…LFLKTYVHDK (144 aa)). Heme c contacts are provided by cysteine 82, cysteine 85, histidine 86, and methionine 148.

Belongs to the cytochrome c family. Post-translationally, binds 1 heme c group covalently per subunit.

It is found in the cell membrane. Its function is as follows. May be involved in electron transfer from bc1 complex to aa3. The chain is Cytochrome c homolog (cycM) from Rickettsia bellii (strain RML369-C).